We begin with the raw amino-acid sequence, 802 residues long: Mitogen-activated protein kinase kinase kinase 20 (802 aa).

The residue at position 2 (S2) is an N-acetylserine. 3 positions are modified to phosphoserine: S2, S3, and S7. Residues 16–277 (LQFFENCGGG…NLPDQCNSFL (262 aa)) form the Protein kinase domain. ATP-binding positions include 22 to 30 (CGGGSFGSV) and K45. Catalysis depends on D133, which acts as the Proton acceptor. T161 bears the Phosphothreonine; by autocatalysis mark. The residue at position 165 (S165) is a Phosphoserine; by autocatalysis. 2 positions are modified to phosphoserine: S275 and S302. Residues 287–308 (IEATLERLKKLERDLSFKEQEL) form a leucine-zipper region. Residues 339–410 (WTEDDVYFWV…KSAIEKLTHD (72 aa)) form the SAM domain. Phosphoserine is present on residues K434, Q453, and S567. T586 is subject to Phosphothreonine. A phosphoserine mark is found at S587, S593, and S599. The segment covering 624–642 (YQQITPSINPSRSSSPTQY) has biased composition (polar residues). The interval 624–802 (YQQITPSINP…RGNYRGRRNF (179 aa)) is disordered. T628 is subject to Phosphothreonine. 5 positions are modified to phosphoserine: S634, S638, S649, S650, and S661. The span at 643–666 (GLSRNFSSLNLSSRDSGFSSLNDS) shows a compositional bias: low complexity. A compositionally biased stretch (basic and acidic residues) spans 667–678 (SSERGRYSDRSR). Residues 670 to 713 (RGRYSDRSRNKYYRGSVSLNSSPKGRYGGKSQHSTPSRERYSGK) form a sensing domain (S) region. S685, S720, S727, and S733 each carry phosphoserine. Residues 728–741 (PDFKRSPNDHDRRV) are compositionally biased toward basic and acidic residues. T744 is subject to Phosphothreonine. The C-terminal domain (CTD) stretch occupies residues 776-802 (RKKTHRQLSAKTSKERTRGNYRGRRNF).

The protein belongs to the protein kinase superfamily. STE Ser/Thr protein kinase family. MAP kinase kinase kinase subfamily. Homodimer. Interacts with ZNF33A. Component of a signaling complex containing at least AKAP13, PKN1, MAPK14, MAP3K20 and MAP2K3. Within this complex, AKAP13 interacts directly with PKN1, which in turn recruits MAPK14, MAP2K3 and MAP3K20. Interacts with EIF2AK4/GCN2; promoting EIF2AK4/GCN2 kinase activity. As to quaternary structure, interacts with isoform ZAKbeta. In terms of assembly, interacts with isoform ZAKalpha. The cofactor is Mg(2+). In terms of processing, activated by phosphorylation by PKN1, followed by autophosphorylation on Thr-161 and Ser-165. Autophosphorylation in response to ribotoxic stress promotes dissociation from colliding ribosomes and activation.

It is found in the cytoplasm. It localises to the nucleus. It carries out the reaction L-seryl-[protein] + ATP = O-phospho-L-seryl-[protein] + ADP + H(+). It catalyses the reaction L-threonyl-[protein] + ATP = O-phospho-L-threonyl-[protein] + ADP + H(+). Activated in response to stress, such as ribosomal stress, osmotic shock and ionizing radiation. Activated by phosphorylation by PKN1, followed by autophosphorylation on Thr-161 and Ser-165. In terms of biological role, stress-activated component of a protein kinase signal transduction cascade that promotes programmed cell death in response to various stress, such as ribosomal stress, osmotic shock and ionizing radiation. Acts by catalyzing phosphorylation of MAP kinase kinases, leading to activation of the JNK (MAPK8/JNK1, MAPK9/JNK2 and/or MAPK10/JNK3) and MAP kinase p38 (MAPK11, MAPK12, MAPK13 and/or MAPK14) pathways. Activates JNK through phosphorylation of MAP2K4/MKK4 and MAP2K7/MKK7, and MAP kinase p38 gamma (MAPK12) via phosphorylation of MAP2K3/MKK3 and MAP2K6/MKK6. Involved in stress associated with adrenergic stimulation: contributes to cardiac decompensation during periods of acute cardiac stress. May be involved in regulation of S and G2 cell cycle checkpoint by mediating phosphorylation of CHEK2. Its function is as follows. Key component of the stress-activated protein kinase signaling cascade in response to ribotoxic stress or UV-B irradiation. Acts as the proximal sensor of ribosome collisions during the ribotoxic stress response (RSR). Directly binds to the ribosome by inserting its flexible C-terminus into the ribosomal intersubunit space, thereby acting as a sentinel for colliding ribosomes. Upon ribosome collisions, activates either the stress-activated protein kinase signal transduction cascade or the integrated stress response (ISR), leading to programmed cell death or cell survival, respectively. Dangerous levels of ribosome collisions trigger the autophosphorylation and activation of MAP3K20, which dissociates from colliding ribosomes and phosphorylates MAP kinase kinases, leading to activation of the JNK and MAP kinase p38 pathways that promote programmed cell death. Less dangerous levels of ribosome collisions trigger the integrated stress response (ISR): MAP3K20 activates EIF2AK4/GCN2 independently of its protein-kinase activity, promoting EIF2AK4/GCN2-mediated phosphorylation of EIF2S1/eIF-2-alpha. Also acts as a histone kinase by phosphorylating histone H3 at 'Ser-28' (H3S28ph). Functionally, isoform that lacks the C-terminal region that mediates ribosome-binding: does not act as a sensor of ribosome collisions in response to ribotoxic stress. May act as an antagonist of isoform ZAKalpha: interacts with isoform ZAKalpha, leading to decrease the expression of isoform ZAKalpha. The protein is Mitogen-activated protein kinase kinase kinase 20 of Mus musculus (Mouse).